The sequence spans 174 residues: Cytochrome c-type biogenesis protein CcmE (174 aa).

The Cytoplasmic segment spans residues 1–7 (MTRKSRR). A helical; Signal-anchor for type II membrane protein membrane pass occupies residues 8 to 28 (LILIGAGLGVLALAAGLILTA). The Periplasmic segment spans residues 29–174 (LNDTIVFFRT…PAVSPARSTP (146 aa)). Heme-binding residues include histidine 121 and tyrosine 125. A compositionally biased stretch (basic and acidic residues) spans 130–144 (VADALKKSGHWKEGE). The segment at 130 to 174 (VADALKKSGHWKEGEEGGPVPPAAKTPGPQSSAAPPAVSPARSTP) is disordered. The span at 156 to 174 (PGPQSSAAPPAVSPARSTP) shows a compositional bias: low complexity.

The protein belongs to the CcmE/CycJ family.

The protein localises to the cell inner membrane. Heme chaperone required for the biogenesis of c-type cytochromes. Transiently binds heme delivered by CcmC and transfers the heme to apo-cytochromes in a process facilitated by CcmF and CcmH. The sequence is that of Cytochrome c-type biogenesis protein CcmE from Azorhizobium caulinodans (strain ATCC 43989 / DSM 5975 / JCM 20966 / LMG 6465 / NBRC 14845 / NCIMB 13405 / ORS 571).